The following is a 459-amino-acid chain: NADH-ubiquinone oxidoreductase chain 4 (459 aa).

Helical transmembrane passes span His22–Leu42, Pro61–Ser81, Arg94–Ala113, Leu114–Ile134, Ala146–Thr166, Trp197–Leu217, Pro225–Ile245, Leu258–Leu278, Ser285–Leu304, Leu308–Leu330, Leu352–Pro372, Leu380–Gly400, and Leu437–Thr457.

Belongs to the complex I subunit 4 family.

Its subcellular location is the mitochondrion membrane. It carries out the reaction a ubiquinone + NADH + 5 H(+)(in) = a ubiquinol + NAD(+) + 4 H(+)(out). Core subunit of the mitochondrial membrane respiratory chain NADH dehydrogenase (Complex I) that is believed to belong to the minimal assembly required for catalysis. Complex I functions in the transfer of electrons from NADH to the respiratory chain. The immediate electron acceptor for the enzyme is believed to be ubiquinone. This chain is NADH-ubiquinone oxidoreductase chain 4 (MT-ND4), found in Pelomedusa subrufa (African side-necked turtle).